We begin with the raw amino-acid sequence, 440 residues long: V-type ATP synthase beta chain (440 aa).

Belongs to the ATPase alpha/beta chains family.

Functionally, produces ATP from ADP in the presence of a proton gradient across the membrane. The V-type beta chain is a regulatory subunit. This is V-type ATP synthase beta chain from Geotalea uraniireducens (strain Rf4) (Geobacter uraniireducens).